The primary structure comprises 255 residues: Zinc import ATP-binding protein ZnuC 1 (255 aa).

Residues 7-220 (IRLQDVTVKI…PAFINLFGTQ (214 aa)) enclose the ABC transporter domain. 39-46 (GPNGAGKS) lines the ATP pocket. Residues 229 to 255 (HHHHDHHHHTDGTVAAGSECSHGDQHA) are disordered.

Belongs to the ABC transporter superfamily. Zinc importer (TC 3.A.1.15.5) family. In terms of assembly, the complex is composed of two ATP-binding proteins (ZnuC), two transmembrane proteins (ZnuB) and a solute-binding protein (ZnuA).

The protein localises to the cell inner membrane. It carries out the reaction Zn(2+)(out) + ATP(in) + H2O(in) = Zn(2+)(in) + ADP(in) + phosphate(in) + H(+)(in). Its function is as follows. Part of the ABC transporter complex ZnuABC involved in zinc import. Responsible for energy coupling to the transport system. This Hahella chejuensis (strain KCTC 2396) protein is Zinc import ATP-binding protein ZnuC 1.